The sequence spans 40 residues: uncharacterized protein (40 aa).

Residues 1–14 show a composition bias toward polar residues; the sequence is MNRMLSLSVQSQRA. The tract at residues 1 to 25 is disordered; that stretch reads MNRMLSLSVQSQRAPASPSPYGLKI.

This is an uncharacterized protein from Treponema pallidum (strain Nichols).